Reading from the N-terminus, the 270-residue chain is MTCRVGLTEWRLAPSGAAAIRLAAAVGADGIQLDFGGPGRGVLVDGPGRAGQLRAVADEAGVDLLALAGNLLNDIGLTSQPAVVQPVLARLADTATELGVPLLIVPSFRRSAITDAMSFTRTAAALRWAVSLAEARGIVLASENVLPPARARQLVEEVGSPAFRLLLDTFNPVRYGLDPAWLATELRPWWADQIHLKDGPPDTGPSPLLGAGQGGVRRTLTALRGSPAPVRALVLENDYRDGHGARLRADLEWARRAAVNARESEKGKLT.

Active-site proton donor/acceptor residues include Glu143 and Glu236.

The protein belongs to the hyi family.

It carries out the reaction 2-epi-5-epi-valiolone 7-phosphate = 5-epi-valiolone 7-phosphate. Involved in the biosynthesis of the alpha-glucosidase inhibitor acarbose. Catalyzes the 2-epimerisation of 2-epi-5-epivaliolone 7-phosphate to yield 5-epi-valiolone 7-phosphate. The chain is 2-epi-5-epi-valiolone 7-phosphate 2-epimerase (acbO) from Actinoplanes sp. (strain ATCC 31044 / CBS 674.73 / SE50/110).